We begin with the raw amino-acid sequence, 112 residues long: Protein ORF1 (112 aa).

A compositionally biased stretch (low complexity) spans 1 to 10 (MEGTDWSGWG). Residues 1 to 20 (MEGTDWSGWGDDSDFPWPKG) are disordered. A helical membrane pass occupies residues 51–71 (IAFVILIVSLFVLLLGVLLAC).

Its subcellular location is the host membrane. In Snake adenovirus serotype 1 (SnAdV-1), this protein is Protein ORF1.